We begin with the raw amino-acid sequence, 355 residues long: UDP-N-acetylglucosamine--N-acetylmuramyl-(pentapeptide) pyrophosphoryl-undecaprenol N-acetylglucosamine transferase (355 aa).

UDP-N-acetyl-alpha-D-glucosamine-binding positions include 14-16, N126, R164, S190, I243, 262-267, and Q288; these read TGG and ALTVAE.

This sequence belongs to the glycosyltransferase 28 family. MurG subfamily.

It is found in the cell inner membrane. The enzyme catalyses di-trans,octa-cis-undecaprenyl diphospho-N-acetyl-alpha-D-muramoyl-L-alanyl-D-glutamyl-meso-2,6-diaminopimeloyl-D-alanyl-D-alanine + UDP-N-acetyl-alpha-D-glucosamine = di-trans,octa-cis-undecaprenyl diphospho-[N-acetyl-alpha-D-glucosaminyl-(1-&gt;4)]-N-acetyl-alpha-D-muramoyl-L-alanyl-D-glutamyl-meso-2,6-diaminopimeloyl-D-alanyl-D-alanine + UDP + H(+). It participates in cell wall biogenesis; peptidoglycan biosynthesis. Its function is as follows. Cell wall formation. Catalyzes the transfer of a GlcNAc subunit on undecaprenyl-pyrophosphoryl-MurNAc-pentapeptide (lipid intermediate I) to form undecaprenyl-pyrophosphoryl-MurNAc-(pentapeptide)GlcNAc (lipid intermediate II). The polypeptide is UDP-N-acetylglucosamine--N-acetylmuramyl-(pentapeptide) pyrophosphoryl-undecaprenol N-acetylglucosamine transferase (Psychromonas ingrahamii (strain DSM 17664 / CCUG 51855 / 37)).